Here is a 212-residue protein sequence, read N- to C-terminus: Neuroendocrine protein 7B2 (212 aa).

An N-terminal signal peptide occupies residues 1–26; that stretch reads MVSRMVSTMLSGLLFWLASGWTPAFA. The cysteines at positions 120 and 130 are disulfide-linked. Ser141 and Ser205 each carry phosphoserine. Residues 174–212 form a disordered region; the sequence is GGERRKRRSVNPYLQGQRLDNVVAKKSVPHFSDEDKDPE.

The protein belongs to the 7B2 family. In terms of assembly, interacts with PCSK2/PC2 early in the secretory pathway. Dissociation occurs at later stages. In terms of processing, proteolytically cleaved in the Golgi by a furin-like convertase to generate bioactive peptides. Post-translationally, sulfated on tyrosine residues.

Its subcellular location is the secreted. Acts as a molecular chaperone for PCSK2/PC2, preventing its premature activation in the regulated secretory pathway. Binds to inactive PCSK2 in the endoplasmic reticulum and facilitates its transport from there to later compartments of the secretory pathway where it is proteolytically matured and activated. Also required for cleavage of PCSK2 but does not appear to be involved in its folding. Plays a role in regulating pituitary hormone secretion. The C-terminal peptide inhibits PCSK2 in vitro. The protein is Neuroendocrine protein 7B2 (SCG5) of Homo sapiens (Human).